Consider the following 183-residue polypeptide: Ankyrin repeat domain-containing protein 39 (183 aa).

ANK repeat units follow at residues 30-59 (DFER…DPSQ), 63-92 (AGYT…KCDA), 96-125 (GGAT…NPRL), and 129-158 (DGMT…ALKA). A Phosphoserine modification is found at serine 153.

It belongs to the ANKRD39 family.

The polypeptide is Ankyrin repeat domain-containing protein 39 (ANKRD39) (Bos taurus (Bovine)).